We begin with the raw amino-acid sequence, 438 residues long: Coenzyme A disulfide reductase (438 aa).

8–33 (GAVAGGATCASQIRRLDKESDIIIFE) is a binding site for FAD. Substrate-binding residues include threonine 15, glutamine 19, arginine 22, serine 39, and asparagine 42. The active-site Nucleophile is cysteine 43. The Redox-active role is filled by cysteine 43. Lysine 71 contributes to the substrate binding site. 151-166 (VLVVGAGYVSLEVLEN) lines the NADP(+) pocket. 267 to 277 (TNVPNIYAIGD) contributes to the FAD binding site. Histidine 299 provides a ligand contact to substrate. Tyrosine 419 provides a ligand contact to FAD. Substrate is bound at residue lysine 427.

The protein belongs to the class-III pyridine nucleotide-disulfide oxidoreductase family. Homodimer. Requires FAD as cofactor.

It catalyses the reaction NADP(+) + 2 CoA = CoA-disulfide + NADPH + H(+). Its function is as follows. Catalyzes specifically the NADPH-dependent reduction of coenzyme A disulfide. This is Coenzyme A disulfide reductase from Staphylococcus aureus (strain MSSA476).